The chain runs to 248 residues: Triosephosphate isomerase (248 aa).

11–13 (NWK) is a substrate binding site. His95 acts as the Electrophile in catalysis. Glu167 serves as the catalytic Proton acceptor. Residues Gly173, Ser212, and 233 to 234 (GG) each bind substrate.

It belongs to the triosephosphate isomerase family. In terms of assembly, homodimer.

Its subcellular location is the cytoplasm. It carries out the reaction D-glyceraldehyde 3-phosphate = dihydroxyacetone phosphate. It participates in carbohydrate biosynthesis; gluconeogenesis. It functions in the pathway carbohydrate degradation; glycolysis; D-glyceraldehyde 3-phosphate from glycerone phosphate: step 1/1. In terms of biological role, involved in the gluconeogenesis. Catalyzes stereospecifically the conversion of dihydroxyacetone phosphate (DHAP) to D-glyceraldehyde-3-phosphate (G3P). The polypeptide is Triosephosphate isomerase (Ralstonia nicotianae (strain ATCC BAA-1114 / GMI1000) (Ralstonia solanacearum)).